A 216-amino-acid polypeptide reads, in one-letter code: Ribosomal RNA small subunit methyltransferase G (216 aa).

S-adenosyl-L-methionine contacts are provided by residues G83, M88, 134–135 (VE), and R149.

Belongs to the methyltransferase superfamily. RNA methyltransferase RsmG family.

Its subcellular location is the cytoplasm. The catalysed reaction is guanosine(527) in 16S rRNA + S-adenosyl-L-methionine = N(7)-methylguanosine(527) in 16S rRNA + S-adenosyl-L-homocysteine. Functionally, specifically methylates the N7 position of guanine in position 527 of 16S rRNA. This Pseudomonas putida (strain ATCC 700007 / DSM 6899 / JCM 31910 / BCRC 17059 / LMG 24140 / F1) protein is Ribosomal RNA small subunit methyltransferase G.